Reading from the N-terminus, the 333-residue chain is Flotillin-like protein FloA (333 aa).

The helical transmembrane segment at 10–30 (IFLIAGGIIFLVLFFHYVPFF) threads the bilayer.

This sequence belongs to the flotillin-like FloA family. Homooligomerizes.

The protein resides in the cell membrane. Its subcellular location is the membrane raft. In terms of biological role, found in functional membrane microdomains (FMM) that may be equivalent to eukaryotic membrane rafts. FMMs are highly dynamic and increase in number as cells age. Flotillins are thought to be important factors in membrane fluidity. The polypeptide is Flotillin-like protein FloA (Bacteroides fragilis (strain ATCC 25285 / DSM 2151 / CCUG 4856 / JCM 11019 / LMG 10263 / NCTC 9343 / Onslow / VPI 2553 / EN-2)).